The sequence spans 430 residues: Immunoglobulin heavy constant delta (430 aa).

Residues 1–406 (APTKAPDVFP…FDDVGSLWTT (406 aa)) lie on the Extracellular side of the membrane. An Ig-like 1 domain is found at 6–98 (PDVFPIISGC…TASKSKKEIF (93 aa)). C28 and C84 form a disulfide bridge. The disordered stretch occupies residues 96-167 (EIFRWPESPK…TPECPSHTQP (72 aa)). A compositionally biased stretch (polar residues) spans 106–118 (AQASSVPTAQPQA). S109 and S110 each carry an O-linked (GalNAc...) serine glycan. T113, T126, T127, T131, and T132 each carry an O-linked (GalNAc...) threonine glycan. Residues 138–158 (GGEEKKKEKEKEEQEERETKT) are compositionally biased toward basic and acidic residues. Ig-like domains lie at 175–263 (PAVQ…RLMA) and 267–373 (PAAQ…RSLE). Cystine bridges form between C190/C249 and C294/C355. 3 N-linked (GlcNAc...) asparagine glycosylation sites follow: N225, N316, and N367. The helical transmembrane segment at 407 to 427 (LSTFVALFILTLLYSGIVTFI) threads the bilayer. Over 428-430 (KVK) the chain is Cytoplasmic.

As to quaternary structure, immunoglobulins are composed of two identical heavy chains and two identical light chains; disulfide-linked. An IgD molecule contains thus a delta heavy chain combined with either a kappa or a lambda light chains. Kappa light chains are found predominantly on the membrane IgD (mIgD) form and lambda on the secreted IgD (sIgD) form, this fact is poorly understood. Membrane-bound IgD molecules are non-covalently associated with a heterodimer of CD79A and CD79B.

The protein resides in the secreted. It is found in the cell membrane. Its function is as follows. Constant region of immunoglobulin heavy chains. Immunoglobulins, also known as antibodies, are membrane-bound or secreted glycoproteins produced by B lymphocytes. In the recognition phase of humoral immunity, the membrane-bound immunoglobulins serve as receptors which, upon binding of a specific antigen, trigger the clonal expansion and differentiation of B lymphocytes into immunoglobulins-secreting plasma cells. Secreted immunoglobulins mediate the effector phase of humoral immunity, which results in the elimination of bound antigens. The antigen binding site is formed by the variable domain of one heavy chain, together with that of its associated light chain. Thus, each immunoglobulin has two antigen binding sites with remarkable affinity for a particular antigen. The variable domains are assembled by a process called V-(D)-J rearrangement and can then be subjected to somatic hypermutations which, after exposure to antigen and selection, allow affinity maturation for a particular antigen. IgD is the major antigen receptor isotype on the surface of most peripheral B-cells, where it is coexpressed with IgM. The membrane-bound IgD (mIgD) induces the phosphorylation of CD79A and CD79B by the Src family of protein tyrosine kinases. Soluble IgD (sIgD) concentration in serum below those of IgG, IgA, and IgM but much higher than that of IgE. IgM and IgD molecules present on B cells have identical V regions and antigen-binding sites. After the antigen binds to the B-cell receptor, the secreted form sIgD is shut off. IgD is a potent inducer of TNF, IL1B, and IL1RN. IgD also induces release of IL6, IL10, and LIF from peripheral blood mononuclear cells. Monocytes seem to be the main producers of cytokines in vitro in the presence of IgD. The chain is Immunoglobulin heavy constant delta from Homo sapiens (Human).